A 563-amino-acid polypeptide reads, in one-letter code: Coiled-coil domain-containing protein 38 (563 aa).

The span at 1 to 11 (MSSNLLPTLNS) shows a compositional bias: polar residues. Residues 1–21 (MSSNLLPTLNSGGKVKDGSTK) form a disordered region. The stretch at 129–212 (KRNTIKKFEK…VKSEIAKTEF (84 aa)) forms a coiled coil. The interval 272 to 311 (ESGRTAVLSEDASQGRDSQGKPSRSLTRTPEKKKSNLAES) is disordered. The segment covering 282–299 (DASQGRDSQGKPSRSLTR) has biased composition (polar residues). Coiled coils occupy residues 384-415 (NIEF…KSKL) and 497-522 (RDEK…AVAQ). The disordered stretch occupies residues 522-563 (QPKKKLGRRLVFHSKPPSGNKQQLPLVNETKTKSQEEEYFFT). Over residues 523-533 (PKKKLGRRLVF) the composition is skewed to basic residues.

Interacts with CCDC42, CFAP53, IFT88 and ODF2. Interacts with CCDC146. Interacts with TEKT3. Interacts with ubiquitinated histone H2A.

It is found in the cytoplasm. The protein resides in the cytoskeleton. Its subcellular location is the microtubule organizing center. It localises to the centrosome. The protein localises to the perinuclear region. It is found in the cell projection. The protein resides in the cilium. Its subcellular location is the flagellum. Functionally, essential for male fertility. Required for sperm flagellum biogenesis. Also required for acrosome biogenesis. Required for the attachment of developing acrosomes to the nucleus during spermiogenesis and may be involved in the transport of fibrous sheath components. The sequence is that of Coiled-coil domain-containing protein 38 (CCDC38) from Homo sapiens (Human).